The sequence spans 451 residues: Protein naked cuticle homolog 2 (451 aa).

A disordered region spans residues 1–108 (MGKLQSKHAA…PRGPGGQRLN (108 aa)). Residue Gly-2 is the site of N-myristoyl glycine attachment. The targeting to the basolateral cell membrane stretch occupies residues 2–173 (GKLQSKHAAA…GSSKTLRVKL (172 aa)). Composition is skewed to basic and acidic residues over residues 34–63 (KGAE…REDQ) and 89–99 (DGERAANREGP). The tract at residues 113–178 (QCDVSVEEDD…LRVKLTVSPE (66 aa)) is interaction with DVL1, DVL2 and DVL3. Residues 119-154 (EEDDRQEWTFTLYDFDNCGKVTREDMSSLMHTIYEV) form the EF-hand domain. Positions 132, 134, 138, and 143 each coordinate Ca(2+). Disordered stretches follow at residues 162–237 (SSGS…PYCV) and 256–408 (YTSR…TVEH). The segment covering 180-215 (SSKRKEGPPAGQDREPTRCRMEGELAEEPRVADRRL) has biased composition (basic and acidic residues). The interval 300–385 (QVLVEHVVPA…PPPPYGHKRY (86 aa)) is interaction with TGFA. Residues 332 to 351 (KSPKGSGKPPGVPASSKSGK) are compositionally biased toward low complexity.

The protein belongs to the NKD family. In terms of assembly, interacts with DVL1, DVL2, DVL3 and PPP2R3A. Interacts with RNF25 and TGFA (via cytoplasmic domain). In terms of processing, ubiquitinated, leading to rapid proteasomal degradation. Interaction with TGFA interferes with RNF25 binding and protects against ubiquitination mediated by RNF25. In terms of tissue distribution, expressed in kidney, lung, pancreas and spleen.

The protein resides in the cell membrane. The protein localises to the cytoplasm. Its subcellular location is the cytoplasmic vesicle. Its function is as follows. Cell autonomous antagonist of the canonical Wnt signaling pathway. May activate a second Wnt signaling pathway that controls planar cell polarity. Required for processing of TGFA and for targeting of TGFA to the basolateral membrane of polarized epithelial cells. In Homo sapiens (Human), this protein is Protein naked cuticle homolog 2 (NKD2).